The chain runs to 362 residues: Epoxyqueuosine reductase (362 aa).

The Proton donor role is filled by D143. Residues 191 to 220 form the 4Fe-4S ferredoxin-type domain; sequence PDSPKHQDSCGKCQACIKLCPTGAIQPGKM. C200, C203, C206, C210, C226, C253, C256, and C260 together coordinate [4Fe-4S] cluster.

The protein belongs to the QueG family. In terms of assembly, monomer. Cob(II)alamin serves as cofactor. [4Fe-4S] cluster is required as a cofactor.

Its subcellular location is the cytoplasm. It carries out the reaction epoxyqueuosine(34) in tRNA + AH2 = queuosine(34) in tRNA + A + H2O. It functions in the pathway tRNA modification; tRNA-queuosine biosynthesis. Functionally, catalyzes the conversion of epoxyqueuosine (oQ) to queuosine (Q), which is a hypermodified base found in the wobble positions of tRNA(Asp), tRNA(Asn), tRNA(His) and tRNA(Tyr). In Francisella cf. novicida (strain Fx1), this protein is Epoxyqueuosine reductase.